A 301-amino-acid chain; its full sequence is Homeobox protein Hox-D13 (301 aa).

2 disordered regions span residues 1–20 (MDGL…TPGQ) and 55–75 (GERS…PGSG). Gly residues predominate over residues 8-18 (SSGGGGGGGTP). Residues 234-293 (GRKKRVPYTKLQLKELENEYAINKFINKDKRRRISAATNLSERQVTIWFQNRRVKDKKIV) constitute a DNA-binding region (homeobox).

It belongs to the Abd-B homeobox family.

The protein localises to the nucleus. Sequence-specific transcription factor that binds gene promoters and activates their transcription. Part of a developmental regulatory system that provides cells with specific positional identities on the anterior-posterior axis. This is Homeobox protein Hox-D13 (HOXD13) from Gallus gallus (Chicken).